We begin with the raw amino-acid sequence, 393 residues long: Upstream-binding factor 1-like protein 1 (393 aa).

DNA-binding regions (HMG box) lie at residues 100–168 (PKRP…ARFR) and 222–288 (QKPP…DLWL). The segment at 308–393 (KNMAMTGGPD…SSGEEIEVDV (86 aa)) is disordered. Basic and acidic residues predominate over residues 365-377 (EENRKKDREKEES).

It is found in the cytoplasm. The protein resides in the nucleus. Its function is as follows. Essential for proliferation of the inner cell mass and trophectodermal cells in peri-implantation development. This Homo sapiens (Human) protein is Upstream-binding factor 1-like protein 1.